A 300-amino-acid polypeptide reads, in one-letter code: HTH-type transcriptional regulator ArgP (300 aa).

The HTH lysR-type domain occupies 4–60; the sequence is FDYKLLAALAAVVEQGGFERAAQALGLSQSAVSQRIKLLEARVGQPVLVRETPPHPT. The segment at residues 21–40 is a DNA-binding region (H-T-H motif); sequence FERAAQALGLSQSAVSQRIK.

This sequence belongs to the LysR transcriptional regulatory family. As to quaternary structure, homodimer.

Functionally, controls the transcription of genes involved in arginine and lysine metabolism. The polypeptide is HTH-type transcriptional regulator ArgP (Pseudomonas aeruginosa (strain UCBPP-PA14)).